The primary structure comprises 373 residues: Phosphoserine aminotransferase (373 aa).

Arg41 contributes to the L-glutamate binding site. Pyridoxal 5'-phosphate-binding positions include 75–76 (GT), Trp101, Thr152, Asp172, and Gln195. The residue at position 196 (Lys196) is an N6-(pyridoxal phosphate)lysine. 236-237 (NT) lines the pyridoxal 5'-phosphate pocket.

Belongs to the class-V pyridoxal-phosphate-dependent aminotransferase family. SerC subfamily. As to quaternary structure, homodimer. Requires pyridoxal 5'-phosphate as cofactor.

The protein resides in the cytoplasm. It carries out the reaction O-phospho-L-serine + 2-oxoglutarate = 3-phosphooxypyruvate + L-glutamate. The catalysed reaction is 4-(phosphooxy)-L-threonine + 2-oxoglutarate = (R)-3-hydroxy-2-oxo-4-phosphooxybutanoate + L-glutamate. It participates in amino-acid biosynthesis; L-serine biosynthesis; L-serine from 3-phospho-D-glycerate: step 2/3. Functionally, catalyzes the reversible conversion of 3-phosphohydroxypyruvate to phosphoserine and of 3-hydroxy-2-oxo-4-phosphonooxybutanoate to phosphohydroxythreonine. The sequence is that of Phosphoserine aminotransferase from Lactobacillus helveticus (strain DPC 4571).